We begin with the raw amino-acid sequence, 894 residues long: Protein translocase subunit SecA (894 aa).

Residues glutamine 87, 105 to 109, and aspartate 512 contribute to the ATP site; that span reads GEGKT. The disordered stretch occupies residues 857-894; sequence FNLGDEPEAQQPVTSKKVGRNEPCPCGSGKKYKQCCGK. The Zn(2+) site is built by cysteine 880, cysteine 882, cysteine 891, and cysteine 892.

Belongs to the SecA family. As to quaternary structure, monomer and homodimer. Part of the essential Sec protein translocation apparatus which comprises SecA, SecYEG and auxiliary proteins SecDF-YajC and YidC. The cofactor is Zn(2+).

It localises to the cell inner membrane. It is found in the cytoplasm. It catalyses the reaction ATP + H2O + cellular proteinSide 1 = ADP + phosphate + cellular proteinSide 2.. Functionally, part of the Sec protein translocase complex. Interacts with the SecYEG preprotein conducting channel. Has a central role in coupling the hydrolysis of ATP to the transfer of proteins into and across the cell membrane, serving as an ATP-driven molecular motor driving the stepwise translocation of polypeptide chains across the membrane. This is Protein translocase subunit SecA from Geotalea uraniireducens (strain Rf4) (Geobacter uraniireducens).